The sequence spans 178 residues: Large ribosomal subunit protein uL6 (178 aa).

This sequence belongs to the universal ribosomal protein uL6 family. As to quaternary structure, part of the 50S ribosomal subunit.

Its function is as follows. This protein binds to the 23S rRNA, and is important in its secondary structure. It is located near the subunit interface in the base of the L7/L12 stalk, and near the tRNA binding site of the peptidyltransferase center. This chain is Large ribosomal subunit protein uL6, found in Halobacterium salinarum (strain ATCC 700922 / JCM 11081 / NRC-1) (Halobacterium halobium).